Reading from the N-terminus, the 426-residue chain is Serine--tRNA ligase (426 aa).

233-235 (TAE) provides a ligand contact to L-serine. 264 to 266 (RSE) provides a ligand contact to ATP. An L-serine-binding site is contributed by Glu-287. 351-354 (EISS) contacts ATP. Ser-387 is an L-serine binding site.

The protein belongs to the class-II aminoacyl-tRNA synthetase family. Type-1 seryl-tRNA synthetase subfamily. In terms of assembly, homodimer. The tRNA molecule binds across the dimer.

Its subcellular location is the cytoplasm. The enzyme catalyses tRNA(Ser) + L-serine + ATP = L-seryl-tRNA(Ser) + AMP + diphosphate + H(+). The catalysed reaction is tRNA(Sec) + L-serine + ATP = L-seryl-tRNA(Sec) + AMP + diphosphate + H(+). The protein operates within aminoacyl-tRNA biosynthesis; selenocysteinyl-tRNA(Sec) biosynthesis; L-seryl-tRNA(Sec) from L-serine and tRNA(Sec): step 1/1. Its function is as follows. Catalyzes the attachment of serine to tRNA(Ser). Is also able to aminoacylate tRNA(Sec) with serine, to form the misacylated tRNA L-seryl-tRNA(Sec), which will be further converted into selenocysteinyl-tRNA(Sec). The sequence is that of Serine--tRNA ligase from Francisella philomiragia subsp. philomiragia (strain ATCC 25017 / CCUG 19701 / FSC 153 / O#319-036).